A 32-amino-acid polypeptide reads, in one-letter code: Cathepsin B-like cysteine proteinase (32 aa).

Positions 1 to 22 (KPNYKRQFEPFSDELIHYINLE) are cleaved as a propeptide — activation peptide.

Belongs to the peptidase C1 family.

Functionally, thiol protease. This Fasciola hepatica (Liver fluke) protein is Cathepsin B-like cysteine proteinase.